The sequence spans 367 residues: Phosphoribosylformylglycinamidine cyclo-ligase (367 aa).

It belongs to the AIR synthase family.

It is found in the cytoplasm. It catalyses the reaction 2-formamido-N(1)-(5-O-phospho-beta-D-ribosyl)acetamidine + ATP = 5-amino-1-(5-phospho-beta-D-ribosyl)imidazole + ADP + phosphate + H(+). It functions in the pathway purine metabolism; IMP biosynthesis via de novo pathway; 5-amino-1-(5-phospho-D-ribosyl)imidazole from N(2)-formyl-N(1)-(5-phospho-D-ribosyl)glycinamide: step 2/2. The chain is Phosphoribosylformylglycinamidine cyclo-ligase from Cyanothece sp. (strain PCC 7425 / ATCC 29141).